A 414-amino-acid chain; its full sequence is Serine hydroxymethyltransferase (414 aa).

Residues leucine 118 and glycine 122–leucine 124 each bind (6S)-5,6,7,8-tetrahydrofolate. At lysine 227 the chain carries N6-(pyridoxal phosphate)lysine. Residues glutamate 240 and serine 350 to phenylalanine 352 each bind (6S)-5,6,7,8-tetrahydrofolate.

The protein belongs to the SHMT family. As to quaternary structure, homodimer. Pyridoxal 5'-phosphate is required as a cofactor.

It localises to the cytoplasm. It catalyses the reaction (6R)-5,10-methylene-5,6,7,8-tetrahydrofolate + glycine + H2O = (6S)-5,6,7,8-tetrahydrofolate + L-serine. It participates in one-carbon metabolism; tetrahydrofolate interconversion. Its pathway is amino-acid biosynthesis; glycine biosynthesis; glycine from L-serine: step 1/1. In terms of biological role, catalyzes the reversible interconversion of serine and glycine with tetrahydrofolate (THF) serving as the one-carbon carrier. This reaction serves as the major source of one-carbon groups required for the biosynthesis of purines, thymidylate, methionine, and other important biomolecules. Also exhibits THF-independent aldolase activity toward beta-hydroxyamino acids, producing glycine and aldehydes, via a retro-aldol mechanism. The polypeptide is Serine hydroxymethyltransferase (Bacillus cereus (strain ZK / E33L)).